We begin with the raw amino-acid sequence, 30 residues long: U1-poneritoxin-Ni3d (30 aa).

The protein belongs to the ponericin-G family. In terms of tissue distribution, expressed by the venom gland.

The protein localises to the secreted. Has activity against some Gram-positive bacteria and S.cerevisiae. Has a non-hemolytic activity. The sequence is that of U1-poneritoxin-Ni3d from Neoponera inversa (Ant).